The sequence spans 340 residues: GTP 3',8-cyclase (340 aa).

Residues lysine 8–glutamate 227 enclose the Radical SAM core domain. Position 17 (arginine 17) interacts with GTP. Cysteine 24 and cysteine 28 together coordinate [4Fe-4S] cluster. Tyrosine 30 is a binding site for S-adenosyl-L-methionine. Cysteine 31 contributes to the [4Fe-4S] cluster binding site. Arginine 71 lines the GTP pocket. Glycine 75 serves as a coordination point for S-adenosyl-L-methionine. Threonine 102 provides a ligand contact to GTP. Residue serine 126 coordinates S-adenosyl-L-methionine. Lysine 163 is a GTP binding site. Methionine 197 contributes to the S-adenosyl-L-methionine binding site. The [4Fe-4S] cluster site is built by cysteine 261 and cysteine 264. Residue arginine 266–arginine 268 coordinates GTP. [4Fe-4S] cluster is bound at residue cysteine 278.

The protein belongs to the radical SAM superfamily. MoaA family. In terms of assembly, monomer and homodimer. [4Fe-4S] cluster serves as cofactor.

It catalyses the reaction GTP + AH2 + S-adenosyl-L-methionine = (8S)-3',8-cyclo-7,8-dihydroguanosine 5'-triphosphate + 5'-deoxyadenosine + L-methionine + A + H(+). It functions in the pathway cofactor biosynthesis; molybdopterin biosynthesis. Catalyzes the cyclization of GTP to (8S)-3',8-cyclo-7,8-dihydroguanosine 5'-triphosphate. The sequence is that of GTP 3',8-cyclase from Staphylococcus carnosus (strain TM300).